The chain runs to 861 residues: ToMV resistance protein Tm-2(GCR236) (861 aa).

Positions 63–83 (VKNLLKDIQELAGDVEDLLDD) form a coiled coil. Positions 162–388 (DDFNMLQAKL…LESMGHKVQD (227 aa)) constitute an NB-ARC domain. An ATP-binding site is contributed by 185-192 (GMPGLGKT). LRR repeat units follow at residues 225–248 (LDIA…NLRS), 305–327 (LHAL…IFNF), 388–411 (DGCA…CFLY), 449–472 (LAED…TYNG), 510–536 (VARL…KLEK), 585–608 (MTCL…IVKL), 609–631 (TRLE…VWES), 652–680 (ISSF…FFEP), 689–710 (LRKL…IFSP), 712–735 (LKAL…LSSY), 736–758 (PHIA…SFPP), 784–810 (LRKL…GYSF), and 811–835 (PQLE…DVSM).

The protein belongs to the disease resistance NB-LRR family. (Microbial infection) Interacts with tobamoviruses mouvement protein at the plasma membrane; this interaction triggers defense responses leading to programmed cell death. As to quaternary structure, binds to HSP90 proteins; this interaction seems required for defense responses toward tobamoviruses.

The protein resides in the cell membrane. In terms of biological role, inhibitor of viral mouvements which confers resistance to some tobamoviruses including tomato mosaic virus (ToMV) (e.g. isolates L, W3 and SL-1) and tobacco mosaic virus (TMV), but not to resistance-breaking isolates (e.g. B7, LT1, LII, Ltbl, ToMV2, and ToMV1-2) ToMV and tomato brown rugose fruit virus (ToBRFV). Elicits a hypersensitive reaction in response to avirulent (Avr) movement proteins from resistance inducing tobamoviruses (e.g. ToMV and TMV) strains, thus leading to programmed cell death. This is ToMV resistance protein Tm-2(GCR236) from Solanum lycopersicum (Tomato).